A 277-amino-acid chain; its full sequence is 3-methyl-2-oxobutanoate hydroxymethyltransferase (277 aa).

Residues Asp53 and Asp96 each contribute to the Mg(2+) site. Residues 53 to 54, Asp96, and Lys126 contribute to the 3-methyl-2-oxobutanoate site; that span reads DS. Glu128 contacts Mg(2+). Residue Glu195 is the Proton acceptor of the active site.

Belongs to the PanB family. In terms of assembly, homodecamer; pentamer of dimers. Mg(2+) is required as a cofactor.

The protein localises to the cytoplasm. It carries out the reaction 3-methyl-2-oxobutanoate + (6R)-5,10-methylene-5,6,7,8-tetrahydrofolate + H2O = 2-dehydropantoate + (6S)-5,6,7,8-tetrahydrofolate. It functions in the pathway cofactor biosynthesis; (R)-pantothenate biosynthesis; (R)-pantoate from 3-methyl-2-oxobutanoate: step 1/2. Functionally, catalyzes the reversible reaction in which hydroxymethyl group from 5,10-methylenetetrahydrofolate is transferred onto alpha-ketoisovalerate to form ketopantoate. This Prosthecochloris aestuarii (strain DSM 271 / SK 413) protein is 3-methyl-2-oxobutanoate hydroxymethyltransferase.